We begin with the raw amino-acid sequence, 130 residues long: Small ribosomal subunit protein uS8 (130 aa).

This sequence belongs to the universal ribosomal protein uS8 family. As to quaternary structure, part of the 30S ribosomal subunit. Contacts proteins S5 and S12.

One of the primary rRNA binding proteins, it binds directly to 16S rRNA central domain where it helps coordinate assembly of the platform of the 30S subunit. The sequence is that of Small ribosomal subunit protein uS8 from Shewanella frigidimarina (strain NCIMB 400).